We begin with the raw amino-acid sequence, 292 residues long: Ribosomal RNA small subunit methyltransferase A (292 aa).

Asn-28, Leu-30, Gly-55, Glu-77, Asp-103, and Asn-123 together coordinate S-adenosyl-L-methionine.

Belongs to the class I-like SAM-binding methyltransferase superfamily. rRNA adenine N(6)-methyltransferase family. RsmA subfamily.

The protein resides in the cytoplasm. It carries out the reaction adenosine(1518)/adenosine(1519) in 16S rRNA + 4 S-adenosyl-L-methionine = N(6)-dimethyladenosine(1518)/N(6)-dimethyladenosine(1519) in 16S rRNA + 4 S-adenosyl-L-homocysteine + 4 H(+). Functionally, specifically dimethylates two adjacent adenosines (A1518 and A1519) in the loop of a conserved hairpin near the 3'-end of 16S rRNA in the 30S particle. May play a critical role in biogenesis of 30S subunits. The protein is Ribosomal RNA small subunit methyltransferase A of Methylobacterium radiotolerans (strain ATCC 27329 / DSM 1819 / JCM 2831 / NBRC 15690 / NCIMB 10815 / 0-1).